The sequence spans 347 residues: Heat-inducible transcription repressor HrcA (347 aa).

The protein belongs to the HrcA family.

Its function is as follows. Negative regulator of class I heat shock genes (grpE-dnaK-dnaJ and groELS operons). Prevents heat-shock induction of these operons. This Nocardia farcinica (strain IFM 10152) protein is Heat-inducible transcription repressor HrcA.